The following is a 116-amino-acid chain: uncharacterized protein (116 aa).

2 disordered regions span residues 1-26 and 74-116; these read MLLT…KSSN and ENDL…KSSI. The segment covering 14-26 has biased composition (low complexity); it reads SANSTDDSSKSSN. Residues 74–86 show a composition bias toward basic and acidic residues; the sequence is ENDLKRSKSQGRE. Residues 104–116 show a composition bias toward polar residues; that stretch reads NTASEIQRTKSSI.

This is an uncharacterized protein from Saccharomyces cerevisiae (strain ATCC 204508 / S288c) (Baker's yeast).